The primary structure comprises 155 residues: Aspartate 1-decarboxylase (155 aa).

The active-site Schiff-base intermediate with substrate; via pyruvic acid is serine 24. Position 24 is a pyruvic acid (Ser) (serine 24). Residue threonine 56 participates in substrate binding. The active-site Proton donor is the tyrosine 57. 72-74 is a substrate binding site; the sequence is GAA.

It belongs to the PanD family. As to quaternary structure, heterooctamer of four alpha and four beta subunits. It depends on pyruvate as a cofactor. Post-translationally, is synthesized initially as an inactive proenzyme, which is activated by self-cleavage at a specific serine bond to produce a beta-subunit with a hydroxyl group at its C-terminus and an alpha-subunit with a pyruvoyl group at its N-terminus.

The protein resides in the cytoplasm. It carries out the reaction L-aspartate + H(+) = beta-alanine + CO2. It functions in the pathway cofactor biosynthesis; (R)-pantothenate biosynthesis; beta-alanine from L-aspartate: step 1/1. Functionally, catalyzes the pyruvoyl-dependent decarboxylation of aspartate to produce beta-alanine. The polypeptide is Aspartate 1-decarboxylase (Agrobacterium fabrum (strain C58 / ATCC 33970) (Agrobacterium tumefaciens (strain C58))).